A 159-amino-acid chain; its full sequence is Small ribosomal subunit protein uS7 (159 aa).

It belongs to the universal ribosomal protein uS7 family. Part of the 30S ribosomal subunit. Contacts proteins S9 and S11.

Functionally, one of the primary rRNA binding proteins, it binds directly to 16S rRNA where it nucleates assembly of the head domain of the 30S subunit. Is located at the subunit interface close to the decoding center, probably blocks exit of the E-site tRNA. This Elusimicrobium minutum (strain Pei191) protein is Small ribosomal subunit protein uS7.